The primary structure comprises 224 residues: Dickkopf-related protein 4 (224 aa).

A signal peptide spans 1-18 (MVAAVLLGLSWLCSPLGA). The tract at residues 41-90 (CLSDTDCNTRKFCLQPRDEKPFCATCRGLRRRCQRDAMCCPGTLCVNDVC) is DKK-type Cys-1. Residues 109–139 (GTHAEGTTGHPVQENQPKRKPSIKKSQGRKG) form a disordered region. Basic residues predominate over residues 126–136 (KRKPSIKKSQG). Cystine bridges form between Cys-145–Cys-157, Cys-151–Cys-166, Cys-156–Cys-194, Cys-176–Cys-202, and Cys-196–Cys-218. Residues 145–218 (CLRTFDCGPG…NRQHARLRVC (74 aa)) form a DKK-type Cys-2 region.

This sequence belongs to the dickkopf family. In terms of assembly, interacts with LRP5 and LRP6. Post-translationally, appears to be not glycosylated. In terms of processing, can be proteolytically processed by a furin-like protease. As to expression, expressed in cerebellum, T-cells, esophagus and lung.

Its subcellular location is the secreted. Antagonizes canonical Wnt signaling by inhibiting LRP5/6 interaction with Wnt and by forming a ternary complex with the transmembrane protein KREMEN that promotes internalization of LRP5/6. DKKs play an important role in vertebrate development, where they locally inhibit Wnt regulated processes such as antero-posterior axial patterning, limb development, somitogenesis and eye formation. In the adult, Dkks are implicated in bone formation and bone disease, cancer and Alzheimer disease. The protein is Dickkopf-related protein 4 (DKK4) of Homo sapiens (Human).